Here is a 94-residue protein sequence, read N- to C-terminus: ESAT-6-like protein EsxI (94 aa).

The protein belongs to the WXG100 family. ESAT-6 subfamily.

It is found in the secreted. The polypeptide is ESAT-6-like protein EsxI (Mycobacterium bovis (strain ATCC BAA-935 / AF2122/97)).